The following is a 520-amino-acid chain: Bifunctional purine biosynthesis protein PurH (520 aa).

The MGS-like domain maps to 1 to 147; sequence MAKIGRALIS…KNNRDVTVVV (147 aa).

Belongs to the PurH family.

The enzyme catalyses (6R)-10-formyltetrahydrofolate + 5-amino-1-(5-phospho-beta-D-ribosyl)imidazole-4-carboxamide = 5-formamido-1-(5-phospho-D-ribosyl)imidazole-4-carboxamide + (6S)-5,6,7,8-tetrahydrofolate. The catalysed reaction is IMP + H2O = 5-formamido-1-(5-phospho-D-ribosyl)imidazole-4-carboxamide. The protein operates within purine metabolism; IMP biosynthesis via de novo pathway; 5-formamido-1-(5-phospho-D-ribosyl)imidazole-4-carboxamide from 5-amino-1-(5-phospho-D-ribosyl)imidazole-4-carboxamide (10-formyl THF route): step 1/1. It participates in purine metabolism; IMP biosynthesis via de novo pathway; IMP from 5-formamido-1-(5-phospho-D-ribosyl)imidazole-4-carboxamide: step 1/1. This chain is Bifunctional purine biosynthesis protein PurH, found in Geobacter sp. (strain M21).